A 62-amino-acid chain; its full sequence is Large ribosomal subunit protein uL30 (62 aa).

The protein belongs to the universal ribosomal protein uL30 family. Part of the 50S ribosomal subunit.

This Herpetosiphon aurantiacus (strain ATCC 23779 / DSM 785 / 114-95) protein is Large ribosomal subunit protein uL30.